Reading from the N-terminus, the 1215-residue chain is Inner capsid protein VP3 (1215 aa).

Residues 1 to 81 (MPRRPRRNAK…RVDNDGDVIT (81 aa)) form a disordered region. Residues 21–44 (LVAPAANASVSSTVNTTTSPTLAA) show a composition bias toward low complexity. A C2H2-type zinc finger spans residues 118-141 (YRCNVCNAEFPSMSAMTEHLRTSH).

Belongs to the turreted BTV-fold inner capsid family. As to quaternary structure, homodecamer; each decamer is made up of two conformers of VP2, called VP2A and VP2B. 12 homodecamers assemble to form an icosahedral capsid. Interacts with VP6.

Its subcellular location is the virion. Functionally, inner capsid protein that self-assembles to form an icosahedral capsid with a T=2 symmetry, which consists of 120 copies of VP2, with channels at each of its five-fold vertices. This capsid constitutes the innermost concentric layer of the viral mature particle. The sequence is that of Inner capsid protein VP3 (S3) from Ctenopharyngodon idella (Grass carp).